The primary structure comprises 607 residues: Aspartate--tRNA(Asp/Asn) ligase (607 aa).

Position 173 (glutamate 173) interacts with L-aspartate. Residues 197–200 form an aspartate region; it reads QLFK. Arginine 219 contributes to the L-aspartate binding site. ATP contacts are provided by residues 219-221 and glutamine 228; that span reads RDE. Histidine 456 is an L-aspartate binding site. Glutamate 498 is an ATP binding site. Arginine 505 provides a ligand contact to L-aspartate. ATP is bound at residue 550-553; sequence GLDR.

It belongs to the class-II aminoacyl-tRNA synthetase family. Type 1 subfamily. In terms of assembly, homodimer.

It localises to the cytoplasm. The catalysed reaction is tRNA(Asx) + L-aspartate + ATP = L-aspartyl-tRNA(Asx) + AMP + diphosphate. Its function is as follows. Aspartyl-tRNA synthetase with relaxed tRNA specificity since it is able to aspartylate not only its cognate tRNA(Asp) but also tRNA(Asn). Reaction proceeds in two steps: L-aspartate is first activated by ATP to form Asp-AMP and then transferred to the acceptor end of tRNA(Asp/Asn). This is Aspartate--tRNA(Asp/Asn) ligase from Magnetococcus marinus (strain ATCC BAA-1437 / JCM 17883 / MC-1).